The primary structure comprises 198 residues: Prolactin (198 aa).

Disulfide bonds link Cys-4/Cys-11, Cys-58/Cys-173, and Cys-190/Cys-198.

It belongs to the somatotropin/prolactin family. In terms of tissue distribution, pituitary gland.

It localises to the secreted. The protein is Prolactin of Chelonia mydas (Green sea-turtle).